The primary structure comprises 208 residues: Putative ADP-ribose pyrophosphatase YjhB (208 aa).

The Nudix hydrolase domain maps to 69–195 (TPKADVRGAV…NTPSQLSMLF (127 aa)). The short motif at 100–121 (GFCEIGLSPAENVVKEIKEESG) is the Nudix box element. Positions 115 and 119 each coordinate Mg(2+).

Belongs to the Nudix hydrolase family. Mg(2+) is required as a cofactor. Requires Mn(2+) as cofactor.

Its function is as follows. Probably mediates the hydrolysis of some nucleoside diphosphate derivatives. This is Putative ADP-ribose pyrophosphatase YjhB (yjhB) from Bacillus subtilis (strain 168).